A 261-amino-acid chain; its full sequence is Putative cysteine protease YopT-like y4zC (261 aa).

Over residues Met-1–Val-15 the composition is skewed to polar residues. 2 disordered regions span residues Met-1–Lys-48 and Ser-54–Ser-73. Low complexity predominate over residues Pro-61–Ser-73. Catalysis depends on residues Cys-93, His-205, and Asp-220.

The protein belongs to the peptidase C58 family.

Its function is as follows. Potential cysteine protease, which may play a central role after invasion of host cell. This Sinorhizobium fredii (strain NBRC 101917 / NGR234) protein is Putative cysteine protease YopT-like y4zC.